The primary structure comprises 468 residues: Inositol polyphosphate 5-phosphatase K (468 aa).

The segment at 34–337 is catalytic; the sequence is VHVVTWNVAS…SDHKPVTGTF (304 aa). A required for interaction with GPR78 and PAK1 region spans residues 318–448; the sequence is NYVSHMAYSI…HSVVGISQPF (131 aa). The tract at residues 340–468 is required for ruffle localization; the sequence is ELNPLMSVPL…DTLYEPEPQI (129 aa).

It belongs to the inositol 1,4,5-trisphosphate 5-phosphatase type II family. In terms of assembly, interacts with GPR78; necessary for INPP5K localization at the endoplasmic reticulum. Interacts with PAK1; competes with GPR78. In terms of tissue distribution, expressed in the skeletal muscle and the eye.

It localises to the endoplasmic reticulum. It is found in the cytoplasm. The enzyme catalyses 1D-myo-inositol 1,4,5-trisphosphate + H2O = 1D-myo-inositol 1,4-bisphosphate + phosphate. It catalyses the reaction 1,2-dioctanoyl-sn-glycero-3-phospho-(1D-myo-inositol-3,4,5-trisphosphate) + H2O = 1,2-dioctanoyl-sn-glycero-3-phospho-(1D-myo-inositol-3,4-bisphosphate) + phosphate. It carries out the reaction 1D-myo-inositol 1,3,4,5-tetrakisphosphate + H2O = 1D-myo-inositol 1,3,4-trisphosphate + phosphate. The catalysed reaction is a 1,2-diacyl-sn-glycero-3-phospho-(1D-myo-inositol-4,5-bisphosphate) + H2O = a 1,2-diacyl-sn-glycero-3-phospho-(1D-myo-inositol 4-phosphate) + phosphate. The enzyme catalyses a 1,2-diacyl-sn-glycero-3-phospho-(1D-myo-inositol-3,4,5-trisphosphate) + H2O = a 1,2-diacyl-sn-glycero-3-phospho-(1D-myo-inositol-3,4-bisphosphate) + phosphate. Inositol 5-phosphatase which acts on inositol 1,4,5-trisphosphate, inositol 1,3,4,5-tetrakisphosphate, phosphatidylinositol 4,5-bisphosphate and phosphatidylinositol 3,4,5-trisphosphate. Has 6-fold higher affinity for phosphatidylinositol 4,5-bisphosphate than for inositol 1,4,5-trisphosphate. Negatively regulates assembly of the actin cytoskeleton. Controls insulin-dependent glucose uptake among inositol 3,4,5-trisphosphate phosphatases; therefore, is the specific regulator for insulin signaling in skeletal muscle. The protein is Inositol polyphosphate 5-phosphatase K of Mus musculus (Mouse).